The chain runs to 97 residues: Class II hydrophobin NC2 (97 aa).

Residues Met1–Ala17 form the signal peptide. 4 cysteine pairs are disulfide-bonded: Cys31/Cys79, Cys40/Cys70, Cys41/Cys53, and Cys80/Cys91. Asn62 carries N-linked (GlcNAc...) asparagine glycosylation.

The protein belongs to the cerato-ulmin hydrophobin family. As to quaternary structure, homotrimer. Further self-assembles to form highly ordered films at water-air interfaces through intermolecular interactions.

The protein resides in the secreted. Its subcellular location is the cell wall. Its function is as follows. Aerial growth, conidiation, and dispersal of filamentous fungi in the environment rely upon a capability of their secreting small amphipathic proteins called hydrophobins (HPBs) with low sequence identity. Class I can self-assemble into an outermost layer of rodlet bundles on aerial cell surfaces, conferring cellular hydrophobicity that supports fungal growth, development and dispersal; whereas Class II form highly ordered films at water-air interfaces through intermolecular interactions but contribute nothing to the rodlet structure. NC2 is a class II hydrophobin that has the potential to adsorb to the hydrophobic interface at the hydrophobic-hydrophilic interface at very high rate but the predicted self-assembly NC2 film possesses a lower flexural rigidity than other class II hydrophobins such as HFBII from Hypocrea jecorina (also known as Trichoderma reesei). The polypeptide is Class II hydrophobin NC2 (Neurospora crassa (strain ATCC 24698 / 74-OR23-1A / CBS 708.71 / DSM 1257 / FGSC 987)).